The following is a 572-amino-acid chain: NADP-dependent malic enzyme (572 aa).

An N-acetylmethionine modification is found at M1. Catalysis depends on Y102, which acts as the Proton donor. Residue R155 coordinates NADP(+). The Proton acceptor role is filled by K173. E245, D246, and D269 together coordinate a divalent metal cation. Residues D269 and 301-318 (GAGE…MAME) each bind NADP(+). S336 carries the post-translational modification Phosphoserine.

It belongs to the malic enzymes family. In terms of assembly, homotetramer. It depends on Mg(2+) as a cofactor. Requires Mn(2+) as cofactor.

It is found in the cytoplasm. It catalyses the reaction (S)-malate + NADP(+) = pyruvate + CO2 + NADPH. It carries out the reaction oxaloacetate + H(+) = pyruvate + CO2. In terms of biological role, catalyzes the oxidative decarboxylation of (S)-malate in the presence of NADP(+) and divalent metal ions, and decarboxylation of oxaloacetate. The chain is NADP-dependent malic enzyme (Me1) from Mus musculus (Mouse).